Consider the following 369-residue polypeptide: Aminomethyltransferase (369 aa).

The protein belongs to the GcvT family. As to quaternary structure, the glycine cleavage system is composed of four proteins: P, T, L and H.

The enzyme catalyses N(6)-[(R)-S(8)-aminomethyldihydrolipoyl]-L-lysyl-[protein] + (6S)-5,6,7,8-tetrahydrofolate = N(6)-[(R)-dihydrolipoyl]-L-lysyl-[protein] + (6R)-5,10-methylene-5,6,7,8-tetrahydrofolate + NH4(+). In terms of biological role, the glycine cleavage system catalyzes the degradation of glycine. The chain is Aminomethyltransferase from Alkaliphilus metalliredigens (strain QYMF).